The following is a 147-amino-acid chain: MFDGIGFMELLLIGVLGLVVLGPERLPVAVRSVTSWIRAMKRMANSVKEELEQELKIEQLHADLKKAESKGLSNLSPELQESIDQLKQAAQSVNRPYQVQDVPAPENQIHNPASQSVSTEASPSASSAPTSESNQGEDTRSNPKANG.

A helical membrane pass occupies residues 2–22 (FDGIGFMELLLIGVLGLVVLG). Residues 85–97 (QLKQAAQSVNRPY) show a composition bias toward polar residues. Residues 85 to 147 (QLKQAAQSVN…DTRSNPKANG (63 aa)) form a disordered region. Residues 113–133 (ASQSVSTEASPSASSAPTSES) show a composition bias toward low complexity.

Belongs to the TatB family. As to quaternary structure, the Tat system comprises two distinct complexes: a TatABC complex, containing multiple copies of TatA, TatB and TatC subunits, and a separate TatA complex, containing only TatA subunits. Substrates initially bind to the TatABC complex, which probably triggers association of the separate TatA complex to form the active translocon.

The protein localises to the cell inner membrane. Its function is as follows. Part of the twin-arginine translocation (Tat) system that transports large folded proteins containing a characteristic twin-arginine motif in their signal peptide across membranes. Together with TatC, TatB is part of a receptor directly interacting with Tat signal peptides. TatB may form an oligomeric binding site that transiently accommodates folded Tat precursor proteins before their translocation. In Shewanella sp. (strain ANA-3), this protein is Sec-independent protein translocase protein TatB.